A 457-amino-acid chain; its full sequence is Probable mitochondrial-processing peptidase subunit beta (457 aa).

H66 is a binding site for Zn(2+). E69 (proton acceptor) is an active-site residue. Residues H70 and E146 each contribute to the Zn(2+) site.

It belongs to the peptidase M16 family. Heterodimer of mas2 (alpha) and qcr1 (beta) subunits, forming the mitochondrial processing protease (MPP) in which mas2 is involved in substrate recognition and binding and qcr1 is the catalytic subunit. Zn(2+) is required as a cofactor.

It localises to the mitochondrion matrix. The catalysed reaction is Release of N-terminal transit peptides from precursor proteins imported into the mitochondrion, typically with Arg in position P2.. Its activity is regulated as follows. Binding to mas2 is required for catalytic activity. In terms of biological role, catalytic subunit of the essential mitochondrial processing protease (MPP), which cleaves the mitochondrial sequence off newly imported precursors proteins. Preferentially, cleaves after an arginine at position P2. The sequence is that of Probable mitochondrial-processing peptidase subunit beta (qcr1) from Schizosaccharomyces pombe (strain 972 / ATCC 24843) (Fission yeast).